We begin with the raw amino-acid sequence, 294 residues long: Decaprenyl-diphosphate synthase subunit 2 (294 aa).

The protein belongs to the FPP/GGPP synthase family. In terms of assembly, heterotetramer of 2 dps1 and 2 dlp1 subunits.

It is found in the mitochondrion. It carries out the reaction 7 isopentenyl diphosphate + (2E,6E)-farnesyl diphosphate = all-trans-decaprenyl diphosphate + 7 diphosphate. The protein operates within cofactor biosynthesis; ubiquinone biosynthesis. Functionally, supplies decaprenyl diphosphate, the precursor for the side chain of the isoprenoid quinones ubiquinone-10. This chain is Decaprenyl-diphosphate synthase subunit 2 (dlp1), found in Schizosaccharomyces pombe (strain 972 / ATCC 24843) (Fission yeast).